Here is a 299-residue protein sequence, read N- to C-terminus: Urease accessory protein UreD (299 aa).

The protein belongs to the UreD family. In terms of assembly, ureD, UreF and UreG form a complex that acts as a GTP-hydrolysis-dependent molecular chaperone, activating the urease apoprotein by helping to assemble the nickel containing metallocenter of UreC. The UreE protein probably delivers the nickel.

It is found in the cytoplasm. Required for maturation of urease via the functional incorporation of the urease nickel metallocenter. The chain is Urease accessory protein UreD from Natronomonas pharaonis (strain ATCC 35678 / DSM 2160 / CIP 103997 / JCM 8858 / NBRC 14720 / NCIMB 2260 / Gabara) (Halobacterium pharaonis).